The primary structure comprises 360 residues: Lipid-A-disaccharide synthase (360 aa).

This sequence belongs to the LpxB family.

The enzyme catalyses a lipid X + a UDP-2-N,3-O-bis[(3R)-3-hydroxyacyl]-alpha-D-glucosamine = a lipid A disaccharide + UDP + H(+). It functions in the pathway bacterial outer membrane biogenesis; LPS lipid A biosynthesis. Its function is as follows. Condensation of UDP-2,3-diacylglucosamine and 2,3-diacylglucosamine-1-phosphate to form lipid A disaccharide, a precursor of lipid A, a phosphorylated glycolipid that anchors the lipopolysaccharide to the outer membrane of the cell. The sequence is that of Lipid-A-disaccharide synthase from Helicobacter pylori (strain HPAG1).